We begin with the raw amino-acid sequence, 80 residues long: uncharacterized protein (80 aa).

This sequence belongs to the 2-oxoacid dehydrogenase family.

This is an uncharacterized protein from Mycobacterium tuberculosis (strain CDC 1551 / Oshkosh).